The following is a 302-amino-acid chain: Sulfate adenylyltransferase subunit 2 (302 aa).

The interval arginine 280 to phenylalanine 302 is disordered.

This sequence belongs to the PAPS reductase family. CysD subfamily. In terms of assembly, heterodimer composed of CysD, the smaller subunit, and CysN.

The enzyme catalyses sulfate + ATP + H(+) = adenosine 5'-phosphosulfate + diphosphate. The protein operates within sulfur metabolism; hydrogen sulfide biosynthesis; sulfite from sulfate: step 1/3. Its function is as follows. With CysN forms the ATP sulfurylase (ATPS) that catalyzes the adenylation of sulfate producing adenosine 5'-phosphosulfate (APS) and diphosphate, the first enzymatic step in sulfur assimilation pathway. APS synthesis involves the formation of a high-energy phosphoric-sulfuric acid anhydride bond driven by GTP hydrolysis by CysN coupled to ATP hydrolysis by CysD. The sequence is that of Sulfate adenylyltransferase subunit 2 from Hahella chejuensis (strain KCTC 2396).